We begin with the raw amino-acid sequence, 350 residues long: Uroporphyrinogen decarboxylase (350 aa).

Residues 27–31 (RQAGR), Phe-46, Asp-76, Tyr-152, Ser-207, and His-321 contribute to the substrate site.

The protein belongs to the uroporphyrinogen decarboxylase family. As to quaternary structure, homodimer.

It localises to the cytoplasm. It carries out the reaction uroporphyrinogen III + 4 H(+) = coproporphyrinogen III + 4 CO2. It functions in the pathway porphyrin-containing compound metabolism; protoporphyrin-IX biosynthesis; coproporphyrinogen-III from 5-aminolevulinate: step 4/4. Catalyzes the decarboxylation of four acetate groups of uroporphyrinogen-III to yield coproporphyrinogen-III. The protein is Uroporphyrinogen decarboxylase of Listeria monocytogenes serotype 4a (strain HCC23).